The chain runs to 666 residues: Endogenous retrovirus group K member 21 Gag polyprotein (666 aa).

The N-myristoyl glycine moiety is linked to residue Gly-2. Disordered regions lie at residues 165 to 189 (GKGPELVGPSESKPRGTSPLPAGQV) and 217 to 264 (ELQY…GSEL). Positions 232–247 (GMPPAPQGRAPYPQPP) are enriched in pro residues. 2 CCHC-type zinc fingers span residues 544–561 (GKCYNCGQIGHLKKNCPV) and 580–597 (DLCPRCKKGKHWASQCRS). Residues 598–641 (KFDKNGQPLSGNEQRGQPQAPQQTGAFPIQPFVPQGFQGQQPPL) form a disordered region. Polar residues predominate over residues 604-622 (QPLSGNEQRGQPQAPQQTG). Positions 624 to 640 (FPIQPFVPQGFQGQQPP) are enriched in low complexity.

The protein belongs to the beta type-B retroviral Gag protein family. HERV class-II K(HML-2) gag subfamily. Post-translationally, myristoylation is essential for retroviral assembly. Alteration of the glycine residue leads to a block in the budding of particles and an accumulation of Gag inside the cell. Specific enzymatic cleavages may yield mature proteins.

The protein localises to the cell membrane. In terms of biological role, the products of the Gag polyproteins of infectious retroviruses perform highly complex orchestrated tasks during the assembly, budding, maturation, and infection stages of the viral replication cycle. During viral assembly, the proteins form membrane associations and self-associations that ultimately result in budding of an immature virion from the infected cell. Gag precursors also function during viral assembly to selectively bind and package two plus strands of genomic RNA. Endogenous Gag proteins may have kept, lost or modified their original function during evolution. In Homo sapiens (Human), this protein is Endogenous retrovirus group K member 21 Gag polyprotein (ERVK-21).